We begin with the raw amino-acid sequence, 322 residues long: Deoxyhypusine hydroxylase (322 aa).

4 residues coordinate Fe cation: histidine 78, glutamate 79, histidine 111, and glutamate 112. HEAT-like PBS-type repeat units follow at residues valine 109–asparagine 135, leucine 203–aspartate 229, phenylalanine 234–arginine 260, and valine 267–aspartate 293. Fe cation is bound by residues histidine 236, glutamate 237, histidine 269, and glutamate 270.

The protein belongs to the deoxyhypusine hydroxylase family. It depends on Fe(2+) as a cofactor.

Its subcellular location is the cytoplasm. It localises to the nucleus. It catalyses the reaction [eIF5A protein]-deoxyhypusine + AH2 + O2 = [eIF5A protein]-hypusine + A + H2O. The protein operates within protein modification; eIF5A hypusination. Functionally, catalyzes the hydroxylation of the N(6)-(4-aminobutyl)-L-lysine intermediate to form hypusine, an essential post-translational modification only found in mature eIF-5A factor. The chain is Deoxyhypusine hydroxylase from Candida glabrata (strain ATCC 2001 / BCRC 20586 / JCM 3761 / NBRC 0622 / NRRL Y-65 / CBS 138) (Yeast).